The sequence spans 83 residues: Alpha-neurotoxin NTX-3 (83 aa).

A signal peptide spans methionine 1 to threonine 21. Cystine bridges form between cysteine 24/cysteine 45, cysteine 38/cysteine 62, cysteine 64/cysteine 75, and cysteine 76/cysteine 81.

Belongs to the three-finger toxin family. Short-chain subfamily. Type I alpha-neurotoxin sub-subfamily. Expressed by the venom gland.

It is found in the secreted. Binds to muscle nicotinic acetylcholine receptor (nAChR) and inhibit acetylcholine from binding to the receptor, thereby impairing neuromuscular transmission. The chain is Alpha-neurotoxin NTX-3 from Naja sputatrix (Malayan spitting cobra).